The primary structure comprises 76 residues: MAKFKIKKGDDVKIITGDDKGKIGKVLSVLPKKSQVIVEGCKIAKKAIKPSEKNPKGGFINKEMPMDISNVALVEG.

It belongs to the universal ribosomal protein uL24 family. In terms of assembly, part of the 50S ribosomal subunit.

Its function is as follows. One of two assembly initiator proteins, it binds directly to the 5'-end of the 23S rRNA, where it nucleates assembly of the 50S subunit. In terms of biological role, one of the proteins that surrounds the polypeptide exit tunnel on the outside of the subunit. The chain is Large ribosomal subunit protein uL24 from Campylobacter hominis (strain ATCC BAA-381 / DSM 21671 / CCUG 45161 / LMG 19568 / NCTC 13146 / CH001A).